A 467-amino-acid chain; its full sequence is UDP-N-acetylmuramate--L-alanine ligase (467 aa).

Position 114–120 (114–120 (GTHGKTT)) interacts with ATP.

This sequence belongs to the MurCDEF family.

The protein resides in the cytoplasm. It carries out the reaction UDP-N-acetyl-alpha-D-muramate + L-alanine + ATP = UDP-N-acetyl-alpha-D-muramoyl-L-alanine + ADP + phosphate + H(+). It functions in the pathway cell wall biogenesis; peptidoglycan biosynthesis. In terms of biological role, cell wall formation. This chain is UDP-N-acetylmuramate--L-alanine ligase, found in Rhodopseudomonas palustris (strain BisB5).